An 868-amino-acid polypeptide reads, in one-letter code: Pro-neuregulin-2, membrane-bound isoform (868 aa).

The interval 1 to 114 (MRQVCCSALP…AAGGMRRDPA (114 aa)) is disordered. Positions 1-127 (MRQVCCSALP…SMLLFGVSLA (127 aa)) are excised as a propeptide. Low complexity predominate over residues 19 to 75 (SSYSYSDSSSSSSSNNSSSSTSSRSSSRSSSRSSRGSTTTTSSSENSGSNSGSIFRP). N-linked (GlcNAc...) asparagine glycans are attached at residues Asn-33 and Asn-34. A compositionally biased stretch (pro residues) spans 76–90 (AAPPEPRPQPQPQPR). The span at 91–108 (SPAARRAAARSRAAAAGG) shows a compositional bias: low complexity. The Extracellular segment spans residues 128–429 (CYSPSLKSVQ…KEAEELYQKR (302 aa)). Residues Asn-163, Asn-294, and Asn-362 are each glycosylated (N-linked (GlcNAc...) asparagine). The 96-residue stretch at 253 to 348 (PKLKKMKSQT…RGRLHVNSVS (96 aa)) folds into the Ig-like C2-type domain. Cystine bridges form between Cys-273-Cys-327, Cys-361-Cys-375, Cys-369-Cys-386, and Cys-388-Cys-397. An EGF-like domain is found at 357–398 (HARKCNETAKSYCVNGGVCYYIEGINQLSCKCPNGFFGQRCL). Residues 430-450 (VLTITGICVALLVVGIVCVVA) traverse the membrane as a helical segment. The Cytoplasmic portion of the chain corresponds to 451-868 (YCKTKKQRRQ…TRAKQDSGPL (418 aa)). 5 disordered regions span residues 469–488 (MCPAHQNRSLANGPSHPRLD), 516–553 (TFSGSHSCSPSHHCSTATPTSSHRHESHTWSLERSESL), 671–690 (LLRHPAPPGPGPGPGADMQR), 720–806 (ASPF…DGAL), and 823–868 (LRSD…SGPL). Positions 518–530 (SGSHSCSPSHHCS) are enriched in low complexity. Residues 538-551 (HRHESHTWSLERSE) are compositionally biased toward basic and acidic residues. The segment covering 766–794 (LNGLAAQRARAARDSLSLSSGSGCGSASA) has biased composition (low complexity).

The protein belongs to the neuregulin family. Interacts with ERBB3 and ERBB4. In terms of processing, proteolytic cleavage close to the plasma membrane on the external face leads to the release of the soluble growth factor form. Post-translationally, extensive glycosylation precedes the proteolytic cleavage. In terms of tissue distribution, expressed in most parts of the brain, especially the olfactory bulb and cerebellum where it localizes in granule and Purkinje cells. In the hippocampus, found in the granule cells of the dentate gyrus. In the basal forebrain, found in the cholinergic cells. In the hindbrain, weakly detectable in the motor trigeminal nucleus. Not detected in the hypothalamus. Also found in the liver and in the thymus. Not detected in heart, adrenal gland, or testis.

The protein localises to the cell membrane. The protein resides in the secreted. Its function is as follows. Direct ligand for ERBB3 and ERBB4 tyrosine kinase receptors. Concomitantly recruits ERBB1 and ERBB2 coreceptors, resulting in ligand-stimulated tyrosine phosphorylation and activation of the ERBB receptors. May also promote the heterodimerization with the EGF receptor. The sequence is that of Pro-neuregulin-2, membrane-bound isoform (Nrg2) from Rattus norvegicus (Rat).